We begin with the raw amino-acid sequence, 1318 residues long: Major tegument protein (1318 aa).

This sequence belongs to the herpesviridae MTP family. In terms of assembly, interacts with host DAXX; this interaction disrupts the chromatin remodeling complex ATRX:DAXX and thus allows viral transcription. Interacts with host SMC6; this interaction targets SMC5-SMC6 complex for proteasomal degradation.

It localises to the virion tegument. Its subcellular location is the host nucleus. Tegument protein that plays a role in the inhibition of host intrinsic defenses to promote viral early gene activation. Interacts with host DAXX and thereby disrupts the complex between DAXX and ATRX. Suppresses the DAXX-ATRX dependent deposition of histone H3.3 on viral chromatin allowing viral transcription. Targets also host SMC5/6 for proteasomal degradation in a CUL7 and calpain-dependent manner to support nuclear membrane-less replication compartment formation and lytic virus replication. The chain is Major tegument protein from Epstein-Barr virus (strain GD1) (HHV-4).